We begin with the raw amino-acid sequence, 320 residues long: tRNA(Ile)-lysidine synthase, chloroplastic (320 aa).

ATP is bound at residue 31 to 36 (SGGKDS).

The protein belongs to the tRNA(Ile)-lysidine synthase family.

It is found in the plastid. It localises to the chloroplast. It carries out the reaction cytidine(34) in tRNA(Ile2) + L-lysine + ATP = lysidine(34) in tRNA(Ile2) + AMP + diphosphate + H(+). Functionally, ligates lysine onto the cytidine present at position 34 of the AUA codon-specific tRNA(Ile) that contains the anticodon CAU, in an ATP-dependent manner. Cytidine is converted to lysidine, thus changing the amino acid specificity of the tRNA from methionine to isoleucine. This chain is tRNA(Ile)-lysidine synthase, chloroplastic, found in Gracilaria tenuistipitata var. liui (Red alga).